A 419-amino-acid polypeptide reads, in one-letter code: Histidine--tRNA ligase (419 aa).

Belongs to the class-II aminoacyl-tRNA synthetase family. In terms of assembly, homodimer.

It localises to the cytoplasm. It catalyses the reaction tRNA(His) + L-histidine + ATP = L-histidyl-tRNA(His) + AMP + diphosphate + H(+). This chain is Histidine--tRNA ligase, found in Methylobacillus flagellatus (strain ATCC 51484 / DSM 6875 / VKM B-1610 / KT).